Here is a 210-residue protein sequence, read N- to C-terminus: 3-hexulose-6-phosphate synthase 1 (210 aa).

It belongs to the HPS/KGPDC family. HPS subfamily.

It carries out the reaction D-ribulose 5-phosphate + formaldehyde = D-arabino-hex-3-ulose 6-phosphate. The protein operates within one-carbon metabolism; formaldehyde assimilation via RuMP pathway; D-fructose 6-phosphate from D-ribulose 5-phosphate and formaldehyde: step 1/2. Functionally, catalyzes the condensation of ribulose 5-phosphate with formaldehyde to form 3-hexulose 6-phosphate. The protein is 3-hexulose-6-phosphate synthase 1 of Staphylococcus saprophyticus subsp. saprophyticus (strain ATCC 15305 / DSM 20229 / NCIMB 8711 / NCTC 7292 / S-41).